The sequence spans 202 residues: Putative 3-methyladenine DNA glycosylase (202 aa).

The protein belongs to the DNA glycosylase MPG family.

The chain is Putative 3-methyladenine DNA glycosylase from Clostridium botulinum (strain Alaska E43 / Type E3).